A 202-amino-acid polypeptide reads, in one-letter code: Securin (202 aa).

Residues 1-92 (MATLIYVDKE…QKQPSFSAKK (92 aa)) are disordered. Residue alanine 2 is modified to N-acetylalanine. The D-box motif lies at 61-64 (RKAL). Short sequence motifs (TEK-box) lie at residues 71–73 (TEK) and 94–96 (TEK). An SH3-binding motif is present at residues 163-173 (XPSPVKMPSPP). Residue serine 165 is modified to Phosphoserine; by CDK1.

The protein belongs to the securin family. In terms of assembly, interacts with RPS10 and DNAJA1. Interacts with the caspase-like ESPL1, and prevents its protease activity probably by covering its active site. Interacts with TP53 and blocks its activity probably by blocking its binding to DNA. Interacts with the Ku 70 kDa subunit of ds-DNA kinase. Interacts with PTTG1IP. In terms of processing, phosphorylated at Ser-165 by CDK1 during mitosis. Post-translationally, phosphorylated in vitro by ds-DNA kinase. Ubiquitinated through 'Lys-11' linkage of ubiquitin moieties by the anaphase promoting complex (APC) at the onset of anaphase, conducting to its degradation. 'Lys-11'-linked ubiquitination is mediated by the E2 ligase UBE2C/UBCH10.

The protein localises to the cytoplasm. The protein resides in the nucleus. In terms of biological role, regulatory protein, which plays a central role in chromosome stability, in the p53/TP53 pathway, and DNA repair. Probably acts by blocking the action of key proteins. During the mitosis, it blocks Separase/ESPL1 function, preventing the proteolysis of the cohesin complex and the subsequent segregation of the chromosomes. At the onset of anaphase, it is ubiquitinated, conducting to its destruction and to the liberation of ESPL1. Its function is however not limited to a blocking activity, since it is required to activate ESPL1. Negatively regulates the transcriptional activity and related apoptosis activity of TP53. The negative regulation of TP53 may explain the strong transforming capability of the protein when it is overexpressed. May also play a role in DNA repair via its interaction with Ku, possibly by connecting DNA damage-response pathways with sister chromatid separation. The polypeptide is Securin (PTTG1) (Pan troglodytes (Chimpanzee)).